The following is a 235-amino-acid chain: MLYSIKMRAESGSRHISGAERIVERRDMAQAMDALTRRGMEHPNGPAEAVTVTVRPITRPLMHIQALPVHEPHVRDQHEARQVLTEELRGMALDPSPVLDLLYSLRKPMRGAVLLDVTGMKRLEPDPQRGVRATCMDYTGNRCEGKNHFREALCLASKVAHCPQIIGELCISDDPDYTTGYFASQVRGYVRIHHIKQAGQQLGGRIFLFRGQQAEIGQCVDYLENQPVMVVMESL.

Belongs to the BioW family. In terms of assembly, homodimer. The cofactor is Mg(2+).

It catalyses the reaction heptanedioate + ATP + CoA = 6-carboxyhexanoyl-CoA + AMP + diphosphate. The protein operates within metabolic intermediate metabolism; pimeloyl-CoA biosynthesis; pimeloyl-CoA from pimelate: step 1/1. Its function is as follows. Catalyzes the transformation of pimelate into pimeloyl-CoA with concomitant hydrolysis of ATP to AMP. This is 6-carboxyhexanoate--CoA ligase from Desulfovibrio desulfuricans (strain ATCC 27774 / DSM 6949 / MB).